The chain runs to 238 residues: Lipoarabinomannan carrier protein LprG (238 aa).

The signal sequence occupies residues 1-26; the sequence is MQAPKHHRRLFAVLATLNTATAVIAG. Cys27 is lipidated: N-palmitoyl cysteine. A lipid anchor (S-diacylglycerol cysteine) is attached at Cys27.

This sequence belongs to the LppX/LprAFG lipoprotein family. In terms of processing, modified by Lgt on Cys-27 with an S-linked diacylglyceral, signal peptide is removed by LspA, Cys-27 is further modifed with a fatty acid on its amino group by Lnt yielding a triacylated protein. Probably glycosylated, which is required for T-cell activation.

The protein resides in the cell inner membrane. The protein localises to the secreted. Its subcellular location is the cell wall. In terms of biological role, helps membrane protein ML0556 (P55) transport triacylglycerides (TAG) across the inner cell membrane into the periplasm and probably ultimately to the outer membrane. Binds TAG in its hydrophobic cavity and transfers it between lipid bilayers. TAG probably regulates lipid metabolism and growth regulation and plays a structural role in the outer membrane. Binds di- and triacylated phosphatidyl-myo-inositol mannosides (PIMs), and glycolipid lipoglycan modulins lipoarabinomannan (LAM) and lipomannan (LM), facilitating their recognition by TLR2. Required for activity of drug efflux transporter ML0556. Required, probably with ML0556, for normal surface localization of LAM. Constitutes a host TLR2 agonist (toll-like receptor) able to stimulate proliferation of CD4+ T-cells derived from a human leprosy patient following protein processing/presentation by MHC class II molecules in peripheral blood mononuclear cells. The protein is Lipoarabinomannan carrier protein LprG of Mycobacterium leprae (strain TN).